The primary structure comprises 432 residues: Adenylosuccinate synthetase (432 aa).

GTP-binding positions include 13–19 and 41–43; these read GDEGKGK and GHT. D14 (proton acceptor) is an active-site residue. The Mg(2+) site is built by D14 and G41. Residues 14-17, 39-42, T130, R144, Q225, T240, and R304 each bind IMP; these read DEGK and NAGH. The active-site Proton donor is H42. 300 to 306 serves as a coordination point for substrate; the sequence is ATTGRRR. Residues R306, 332–334, and 415–417 each bind GTP; these read KLD and STG.

It belongs to the adenylosuccinate synthetase family. Homodimer. Mg(2+) serves as cofactor.

It is found in the cytoplasm. It carries out the reaction IMP + L-aspartate + GTP = N(6)-(1,2-dicarboxyethyl)-AMP + GDP + phosphate + 2 H(+). Its pathway is purine metabolism; AMP biosynthesis via de novo pathway; AMP from IMP: step 1/2. Functionally, plays an important role in the de novo pathway of purine nucleotide biosynthesis. Catalyzes the first committed step in the biosynthesis of AMP from IMP. The polypeptide is Adenylosuccinate synthetase (Salmonella heidelberg (strain SL476)).